Reading from the N-terminus, the 1256-residue chain is Nephrin (1256 aa).

The signal sequence occupies residues 1–35 (MGAKEATVRGPGASPVHRTCHLIPLLLAGMLTTGL). Topologically, residues 36–1078 (AQSPVPTSAP…PGPPRLPLLP (1043 aa)) are extracellular. 6 Ig-like C2-type domains span residues 39-144 (PVPT…VILS), 149-247 (PKVL…ASFT), 256-347 (PPVI…RSIT), 354-448 (PSAV…KSLT), 454-554 (PAQK…TQLV), and 558-649 (PPTN…ETVS). N54 is a glycosylation site (N-linked (GlcNAc...) asparagine). 3 cysteine pairs are disulfide-bonded: C67-C125, C174-C231, and C279-C331. 2 N-linked (GlcNAc...) asparagine glycosylation sites follow: N370 and N415. C375 and C431 are joined by a disulfide. S446 bears the Phosphoserine mark. C479 and C542 are joined by a disulfide. The disordered stretch occupies residues 491 to 516 (TWLKDSRPVNDPRQSQEPRRVQLGSV). The span at 494 to 510 (KDSRPVNDPRQSQEPRR) shows a compositional bias: basic and acidic residues. N561, N578, N591, and N722 each carry an N-linked (GlcNAc...) asparagine glycan. C581 and C637 are disulfide-bonded. Ig-like C2-type domains lie at 754 to 846 (PTIR…LVRL) and 852 to 953 (PQVD…VSIS). Cystine bridges form between C775-C830 and C877-C934. The Fibronectin type-III domain occupies 957 to 1051 (PPLGLKVVSV…GIQVSITTPG (95 aa)). The disordered stretch occupies residues 1048–1071 (TTPGLDQAPEDTDQPLPTEQPPGP). Residues 1079 to 1099 (VLFAVGGLLLLSNASCVGGLL) traverse the membrane as a helical segment. At 1100-1256 (WRRRLRRLAE…LPFELRGHLV (157 aa)) the chain is on the cytoplasmic side. A Phosphoserine modification is found at S1112. Positions 1112–1128 (SEKTEAGSEEDRIRNEY) are enriched in basic and acidic residues. Residues 1112-1143 (SEKTEAGSEEDRIRNEYEESQWTGDRDTRSST) are disordered. T1115 is modified (phosphothreonine). The residue at position 1119 (S1119) is a Phosphoserine. A Phosphotyrosine; by FYN modification is found at Y1208.

It belongs to the immunoglobulin superfamily. In terms of assembly, interacts with NPHS2 and with CD2AP (via C-terminal domain). Interacts with MAGI1 (via PDZ 2 and 3 domains) forming a tripartite complex with IGSF5/JAM4. Forms a complex with ACTN4, CASK, IQGAP1, MAGI2, SPTAN1 and SPTBN1. Interacts with DDN; the interaction is direct. Self-associates (via the Ig-like domains). Also interacts (via the Ig-like domains) with KIRREL1 and KIRREL2; the interaction with KIRREL1 is dependent on KIRREL1 glycosylation. Interacts with KIRREL3. Interacts with phosphatidylinositol 3-kinase regulatory subunit PIK3R1; the interaction is reduced by high glucose levels. Post-translationally, phosphorylated at Tyr-1208 by FYN, leading to the recruitment and activation of phospholipase C-gamma-1/PLCG1. Tyrosine phosphorylation is reduced by high glucose levels. Dephosphorylated by tensin TNS2 which leads to reduced binding of NPHN1 to PIK3R1. As to expression, expressed in kidney glomeruli. In the embryo, expressed in the mesonephric kidney at 11 dpc with strong expression in cranial tubules with podocyte-like structures. Expression is observed in the podocytes of the developing kidney from 13 dpc. High expression is also detected in the developing cerebellum, hindbrain, spinal cord, retina and hypothalamus. Expressed in skeletal muscle during myoblast fusion such as in the adult following acute injury and in the embryo but not detected in uninjured adult skeletal muscle. Isoform 1 and isoform 2 are expressed in the newborn brain and developing cerebellum. Isoform 1 is the predominant isoform in adult kidney.

Its subcellular location is the cell membrane. Functionally, seems to play a role in the development or function of the kidney glomerular filtration barrier. Regulates glomerular vascular permeability. May anchor the podocyte slit diaphragm to the actin cytoskeleton. Plays a role in skeletal muscle formation through regulation of myoblast fusion. The sequence is that of Nephrin (Nphs1) from Mus musculus (Mouse).